A 118-amino-acid chain; its full sequence is Small ribosomal subunit protein uS13 (118 aa).

Positions 94–118 (SLPLRGQRTKTNARTRKGPRKPIKK) are disordered.

Belongs to the universal ribosomal protein uS13 family. In terms of assembly, part of the 30S ribosomal subunit. Forms a loose heterodimer with protein S19. Forms two bridges to the 50S subunit in the 70S ribosome.

Located at the top of the head of the 30S subunit, it contacts several helices of the 16S rRNA. In the 70S ribosome it contacts the 23S rRNA (bridge B1a) and protein L5 of the 50S subunit (bridge B1b), connecting the 2 subunits; these bridges are implicated in subunit movement. Contacts the tRNAs in the A and P-sites. In Alteromonas mediterranea (strain DSM 17117 / CIP 110805 / LMG 28347 / Deep ecotype), this protein is Small ribosomal subunit protein uS13.